A 98-amino-acid chain; its full sequence is Large ribosomal subunit protein uL23 (98 aa).

Belongs to the universal ribosomal protein uL23 family. In terms of assembly, part of the 50S ribosomal subunit. Contacts protein L29, and trigger factor when it is bound to the ribosome.

Functionally, one of the early assembly proteins it binds 23S rRNA. One of the proteins that surrounds the polypeptide exit tunnel on the outside of the ribosome. Forms the main docking site for trigger factor binding to the ribosome. This Nitrobacter hamburgensis (strain DSM 10229 / NCIMB 13809 / X14) protein is Large ribosomal subunit protein uL23.